The following is a 124-amino-acid chain: Fluoride-specific ion channel FluC (124 aa).

Helical transmembrane passes span 4–24 (LLFV…MSII), 35–55 (FGTL…YALG), 62–82 (PELK…FSTF), and 95–115 (WFKS…MVYL). Na(+) contacts are provided by Gly74 and Thr77.

This sequence belongs to the fluoride channel Fluc/FEX (TC 1.A.43) family.

Its subcellular location is the cell inner membrane. The catalysed reaction is fluoride(in) = fluoride(out). With respect to regulation, na(+) is not transported, but it plays an essential structural role and its presence is essential for fluoride channel function. Functionally, fluoride-specific ion channel. Important for reducing fluoride concentration in the cell, thus reducing its toxicity. This Shewanella denitrificans (strain OS217 / ATCC BAA-1090 / DSM 15013) protein is Fluoride-specific ion channel FluC.